The chain runs to 560 residues: Nucleoprotein (560 aa).

Positions 54–236 (LRKAKRSDAD…ITRDESAVNI (183 aa)) are binding site for the cap structure m7GTP. Residues 323–332 (GRSWDNTSVD) show a composition bias toward polar residues. A disordered region spans residues 323–349 (GRSWDNTSVDLNPKPDPGPRAPEKNGQ). Mn(2+)-binding residues include aspartate 380 and glutamate 382. Zn(2+) contacts are provided by glutamate 390, cysteine 497, histidine 500, and cysteine 521. Aspartate 525 contributes to the Mn(2+) binding site.

This sequence belongs to the arenaviridae nucleocapsid protein family. In terms of assembly, homomultimerizes to form the nucleocapsid. Binds to viral genomic RNA. Interacts with glycoprotein G2. Interacts with protein Z; this interaction probably directs the encapsidated genome to budding sites. Interacts with protein L; this interaction does not interfere with Z-L interaction. Interacts with host IKBKE (via Protein kinase domain); the interaction inhibits IKBKE kinase activity.

It localises to the virion. The protein resides in the host cytoplasm. Functionally, encapsidates the genome, protecting it from nucleases. The encapsidated genomic RNA is termed the nucleocapsid (NC). Serves as template for viral transcription and replication. The increased presence of protein N in host cell does not seem to trigger the switch from transcription to replication as observed in other negative strain RNA viruses. Through the interaction with host IKBKE, strongly inhibits the phosphorylation and nuclear translocation of host IRF3, a protein involved in interferon activation pathway, leading to the inhibition of interferon-beta and IRF3-dependent promoters activation. Also encodes a functional 3'-5' exoribonuclease that degrades preferentially dsRNA substrates and thereby participates in the suppression of interferon induction. The sequence is that of Nucleoprotein from Cupixi mammarenavirus (isolate Rat/Brasil/BeAn 119303/1970) (CPXV).